We begin with the raw amino-acid sequence, 589 residues long: Formate--tetrahydrofolate ligase (589 aa).

ATP is bound at residue 74–81 (TPFGEGKS).

Belongs to the formate--tetrahydrofolate ligase family.

It catalyses the reaction (6S)-5,6,7,8-tetrahydrofolate + formate + ATP = (6R)-10-formyltetrahydrofolate + ADP + phosphate. It functions in the pathway one-carbon metabolism; tetrahydrofolate interconversion. The protein is Formate--tetrahydrofolate ligase of Thermodesulfovibrio yellowstonii (strain ATCC 51303 / DSM 11347 / YP87).